A 327-amino-acid chain; its full sequence is Phenylalanine--tRNA ligase alpha subunit (327 aa).

Glutamate 252 contributes to the Mg(2+) binding site.

This sequence belongs to the class-II aminoacyl-tRNA synthetase family. Phe-tRNA synthetase alpha subunit type 1 subfamily. As to quaternary structure, tetramer of two alpha and two beta subunits. Mg(2+) is required as a cofactor.

The protein localises to the cytoplasm. The enzyme catalyses tRNA(Phe) + L-phenylalanine + ATP = L-phenylalanyl-tRNA(Phe) + AMP + diphosphate + H(+). The protein is Phenylalanine--tRNA ligase alpha subunit of Serratia proteamaculans (strain 568).